The following is a 251-amino-acid chain: Pyrroloquinoline-quinone synthase (251 aa).

It belongs to the PqqC family.

It catalyses the reaction 6-(2-amino-2-carboxyethyl)-7,8-dioxo-1,2,3,4,7,8-hexahydroquinoline-2,4-dicarboxylate + 3 O2 = pyrroloquinoline quinone + 2 H2O2 + 2 H2O + H(+). It participates in cofactor biosynthesis; pyrroloquinoline quinone biosynthesis. Its function is as follows. Ring cyclization and eight-electron oxidation of 3a-(2-amino-2-carboxyethyl)-4,5-dioxo-4,5,6,7,8,9-hexahydroquinoline-7,9-dicarboxylic-acid to PQQ. In Cronobacter sakazakii (strain ATCC BAA-894) (Enterobacter sakazakii), this protein is Pyrroloquinoline-quinone synthase.